We begin with the raw amino-acid sequence, 203 residues long: Lipoprotein MlpJ (203 aa).

The signal sequence occupies residues 1 to 17 (MKIINILFCISLLLLNS). A lipid anchor (N-palmitoyl cysteine) is attached at Cys-18. A lipid anchor (S-diacylglycerol cysteine) is attached at Cys-18. The interval 26–47 (LKNNAQQTKSRKKRDLSQEELP) is disordered.

This sequence belongs to the Multicopy lipoprotein (Mlp) family.

It localises to the cell outer membrane. An outer membrane protein that may participate in pathogenesis. Some human Lyme disease patients have antibodies against this protein. The Mlp proteins probably undergo intragenic recombination, generating new alleles. The chain is Lipoprotein MlpJ from Borreliella burgdorferi (strain ATCC 35210 / DSM 4680 / CIP 102532 / B31) (Borrelia burgdorferi).